A 396-amino-acid chain; its full sequence is Cystathionine beta-lyase (396 aa).

The residue at position 211 (Lys211) is an N6-(pyridoxal phosphate)lysine.

This sequence belongs to the trans-sulfuration enzymes family. Homotetramer. Pyridoxal 5'-phosphate is required as a cofactor.

It is found in the cytoplasm. It catalyses the reaction L,L-cystathionine + H2O = L-homocysteine + pyruvate + NH4(+). The catalysed reaction is an S-substituted L-cysteine + H2O = a thiol + pyruvate + NH4(+). The protein operates within amino-acid biosynthesis; L-methionine biosynthesis via de novo pathway; L-homocysteine from L-cystathionine: step 1/1. Functionally, catalyzes the cleavage of cystathionine to homocysteine, pyruvate and ammonia during methionine biosynthesis. The polypeptide is Cystathionine beta-lyase (metC) (Haemophilus influenzae (strain ATCC 51907 / DSM 11121 / KW20 / Rd)).